The chain runs to 160 residues: MDLVTLDATQHASYPEYCSLLFQGKASKQLSFEQIANHLGRSEVAVAALFYGHARASQEDVEKLCELLGIPPADLSKRLRGFPDRGKGVDMPPKDPLIYRLYEIVQNYGQAYKAVMNEKFGDGIMSAIAFSTKVDKELDDQGNAWAVITMKGKWLPFTRF.

Catalysis depends on residues Arg100, Glu103, and Ser126.

This sequence belongs to the cyanase family.

The catalysed reaction is cyanate + hydrogencarbonate + 3 H(+) = NH4(+) + 2 CO2. In terms of biological role, catalyzes the reaction of cyanate with bicarbonate to produce ammonia and carbon dioxide. This is Cyanate hydratase from Arthroderma otae (strain ATCC MYA-4605 / CBS 113480) (Microsporum canis).